The chain runs to 494 residues: Leucine-rich repeat extensin-like protein 4 (494 aa).

A signal peptide spans 1–25 (MKNNTTQSLLLLLLFFFFFFEISHS). N-linked (GlcNAc...) asparagine glycosylation is found at Asn-60, Asn-94, and Asn-106. LRR repeat units lie at residues 121–145 (IRTV…LGLL), 146–168 (TDLA…KFKQ), 169–193 (LKLL…VLHL), 194–217 (PSLK…LFSK), 219–240 (LDAI…FGDS), 242–263 (VSVI…LVEM), 264–287 (KNLN…IGRL), 289–311 (NVTV…VGGM), and 312–335 (VEVE…ICQL). N-linked (GlcNAc...) asparagine glycosylation occurs at Asn-289. N-linked (GlcNAc...) asparagine glycosylation occurs at Asn-340. The tract at residues 404-494 (SPPIVALPPP…YASPPPPPFY (91 aa)) is contains the Ser-Pro(4) repeats. The segment covering 422 to 479 (PPVYSPPPSPPVFSPPPSPPVYSPPPPPSIHYSSPPPPPVHHSSPPPPSPEFEGPLPP) has biased composition (pro residues). The interval 422–482 (PPVYSPPPSP…FEGPLPPVIG (61 aa)) is disordered.

Post-translationally, hydroxylated on proline residues in the S-P-P-P-P repeat. O-glycosylated on hydroxyprolines. As to expression, expressed in roots, stems, leaves and flowers, mostly in vascular tissues.

The protein localises to the secreted. The protein resides in the cell wall. In terms of biological role, modulates cell morphogenesis by regulating cell wall formation and assembly, and/or growth polarization. In Arabidopsis thaliana (Mouse-ear cress), this protein is Leucine-rich repeat extensin-like protein 4 (LRX4).